A 126-amino-acid chain; its full sequence is Fluoride-specific ion channel FluC 1 (126 aa).

4 helical membrane-spanning segments follow: residues 1–21 (MAGS…GAWL), 38–58 (WGTF…LALY), 67–87 (LALL…TFAV), and 99–119 (FVSL…AGVG). Glycine 77 and serine 80 together coordinate Na(+).

This sequence belongs to the fluoride channel Fluc/FEX (TC 1.A.43) family.

It is found in the cell inner membrane. The catalysed reaction is fluoride(in) = fluoride(out). Na(+) is not transported, but it plays an essential structural role and its presence is essential for fluoride channel function. Functionally, fluoride-specific ion channel. Important for reducing fluoride concentration in the cell, thus reducing its toxicity. In Synechococcus sp. (strain CC9902), this protein is Fluoride-specific ion channel FluC 1.